The primary structure comprises 725 residues: IML2-like protein SCY_3392 (725 aa).

A Phosphothreonine modification is found at T196. 3 positions are modified to phosphoserine: S246, S377, and S380.

Belongs to the IML2 family.

The protein resides in the cytoplasm. Its subcellular location is the nucleus. Its function is as follows. May be involved in mitochondrial DNA stability. The chain is IML2-like protein SCY_3392 from Saccharomyces cerevisiae (strain YJM789) (Baker's yeast).